The following is a 466-amino-acid chain: FERM domain-containing protein 8 (466 aa).

Methionine 1 is modified (N-acetylmethionine). The tract at residues 1–21 (MEGAEGNAGQPGPAERSHRSS) is disordered. Serine 24 is modified (phosphoserine). One can recognise an FERM domain in the interval 30 to 377 (ADVLVYLADD…YCIELSQAAE (348 aa)). The disordered stretch occupies residues 379–409 (TLSQESASGPHEAPSPSPPPTQRPKLRRQGS). A Phosphoserine modification is found at serine 384. Pro residues predominate over residues 391-400 (APSPSPPPTQ). Residue serine 409 is modified to Phosphoserine. Residue threonine 420 is modified to Phosphothreonine. A phosphoserine mark is found at serine 440 and serine 447. Over residues 442 to 460 (FSRQLSSSQGSYTVVQPTD) the composition is skewed to polar residues. Residues 442-466 (FSRQLSSSQGSYTVVQPTDDSLEQS) are disordered.

As to quaternary structure, interacts with iRhom proteins, including iRhom2/RHBDF2 (via cytoplasmic N-termini); this interaction leads to mutual protein stabilization. Interacts with LRP6; this interaction affects LRP6-binding to AXIN1. Widely expressed (at protein level).

Its subcellular location is the cytoplasm. It is found in the cytosol. The protein localises to the cell membrane. Functionally, promotes the cell surface stability of iRhom1/RHBDF1 and iRhom2/RHBDF2 and prevents their degradation via the endolysosomal pathway. By acting on iRhoms, involved in ADAM17-mediated shedding of TNF, amphiregulin/AREG, HBEGF and TGFA from the cell surface. Negatively regulates Wnt signaling, possibly by antagonizing the recruitment of AXIN1 to LRP6. This is FERM domain-containing protein 8 (Frmd8) from Mus musculus (Mouse).